We begin with the raw amino-acid sequence, 335 residues long: Adenosine deaminase (335 aa).

Zn(2+)-binding residues include H12 and H14. Positions 14 and 16 each coordinate substrate. Residue H197 coordinates Zn(2+). The active-site Proton donor is the E200. D278 serves as a coordination point for Zn(2+).

The protein belongs to the metallo-dependent hydrolases superfamily. Adenosine and AMP deaminases family. Adenosine deaminase subfamily. Zn(2+) is required as a cofactor.

It carries out the reaction adenosine + H2O + H(+) = inosine + NH4(+). It catalyses the reaction 2'-deoxyadenosine + H2O + H(+) = 2'-deoxyinosine + NH4(+). Catalyzes the hydrolytic deamination of adenosine and 2-deoxyadenosine. The polypeptide is Adenosine deaminase (Clostridium botulinum (strain Loch Maree / Type A3)).